The following is a 113-amino-acid chain: uncharacterized protein (113 aa).

The interval 31–113 (SNNNNNNNNN…YSPTKFNLQY (83 aa)) is disordered. Residues 32-98 (NNNNNNNNNN…NNNNNNNNNN (67 aa)) show a composition bias toward low complexity. Polar residues predominate over residues 99–113 (SSSFEYSPTKFNLQY).

This is an uncharacterized protein from Dictyostelium discoideum (Social amoeba).